A 314-amino-acid chain; its full sequence is 1D-myo-inositol 2-acetamido-2-deoxy-alpha-D-glucopyranoside deacetylase 2 (314 aa).

Positions 25, 28, and 161 each coordinate Zn(2+).

The protein belongs to the MshB deacetylase family. Requires Zn(2+) as cofactor.

The enzyme catalyses 1D-myo-inositol 2-acetamido-2-deoxy-alpha-D-glucopyranoside + H2O = 1D-myo-inositol 2-amino-2-deoxy-alpha-D-glucopyranoside + acetate. Catalyzes the deacetylation of 1D-myo-inositol 2-acetamido-2-deoxy-alpha-D-glucopyranoside (GlcNAc-Ins) in the mycothiol biosynthesis pathway. The protein is 1D-myo-inositol 2-acetamido-2-deoxy-alpha-D-glucopyranoside deacetylase 2 of Frankia casuarinae (strain DSM 45818 / CECT 9043 / HFP020203 / CcI3).